A 278-amino-acid polypeptide reads, in one-letter code: Biotin synthase (278 aa).

In terms of domain architecture, Radical SAM core spans 1-227 (MQIMLCAISN…QSVVMVAGGR (227 aa)). The [4Fe-4S] cluster site is built by C16, C20, and C23. Residues C60, C95, and C153 each contribute to the [2Fe-2S] cluster site.

The protein belongs to the radical SAM superfamily. Biotin synthase family. Homodimer. The cofactor is [4Fe-4S] cluster. It depends on [2Fe-2S] cluster as a cofactor.

The enzyme catalyses (4R,5S)-dethiobiotin + (sulfur carrier)-SH + 2 reduced [2Fe-2S]-[ferredoxin] + 2 S-adenosyl-L-methionine = (sulfur carrier)-H + biotin + 2 5'-deoxyadenosine + 2 L-methionine + 2 oxidized [2Fe-2S]-[ferredoxin]. The protein operates within cofactor biosynthesis; biotin biosynthesis; biotin from 7,8-diaminononanoate: step 2/2. Functionally, catalyzes the conversion of dethiobiotin (DTB) to biotin by the insertion of a sulfur atom into dethiobiotin via a radical-based mechanism. This Campylobacter jejuni (strain RM1221) protein is Biotin synthase.